The primary structure comprises 579 residues: Isocitrate dehydrogenase kinase/phosphatase (579 aa).

ATP contacts are provided by residues 324–330 and Lys345; that span reads ADGTPGM. Asp380 is an active-site residue.

This sequence belongs to the AceK family.

It localises to the cytoplasm. The catalysed reaction is L-seryl-[isocitrate dehydrogenase] + ATP = O-phospho-L-seryl-[isocitrate dehydrogenase] + ADP + H(+). Functionally, bifunctional enzyme which can phosphorylate or dephosphorylate isocitrate dehydrogenase (IDH) on a specific serine residue. This is a regulatory mechanism which enables bacteria to bypass the Krebs cycle via the glyoxylate shunt in response to the source of carbon. When bacteria are grown on glucose, IDH is fully active and unphosphorylated, but when grown on acetate or ethanol, the activity of IDH declines drastically concomitant with its phosphorylation. In Xanthomonas campestris pv. campestris (strain 8004), this protein is Isocitrate dehydrogenase kinase/phosphatase.